The chain runs to 245 residues: Phycocyanobilin:ferredoxin oxidoreductase (245 aa).

The protein belongs to the HY2 family.

It catalyses the reaction (2R,3Z)-phycocyanobilin + 4 oxidized [2Fe-2S]-[ferredoxin] = biliverdin IXalpha + 4 reduced [2Fe-2S]-[ferredoxin] + 4 H(+). Its function is as follows. Catalyzes the four-electron reduction of biliverdin IX-alpha (2-electron reduction at both the A and D rings); the reaction proceeds via an isolatable 2-electron intermediate, 181,182-dihydrobiliverdin. The chain is Phycocyanobilin:ferredoxin oxidoreductase from Gloeothece citriformis (strain PCC 7424) (Cyanothece sp. (strain PCC 7424)).